We begin with the raw amino-acid sequence, 609 residues long: UvrABC system protein C (609 aa).

The GIY-YIG domain occupies 16 to 94 (SSAGVYRMYD…IKQYMPKYNV (79 aa)). The 36-residue stretch at 203–238 (KQVISELVAKMEEAAEQQAYEQAARFRDQIMALRRV) folds into the UVR domain.

It belongs to the UvrC family. As to quaternary structure, interacts with UvrB in an incision complex.

It localises to the cytoplasm. In terms of biological role, the UvrABC repair system catalyzes the recognition and processing of DNA lesions. UvrC both incises the 5' and 3' sides of the lesion. The N-terminal half is responsible for the 3' incision and the C-terminal half is responsible for the 5' incision. The sequence is that of UvrABC system protein C from Shewanella sp. (strain MR-4).